The chain runs to 37 residues: MKVKPSVKRICAKCRVIRRHGKIRVICEDPRHKQRQG.

It belongs to the bacterial ribosomal protein bL36 family.

This Thermobifida fusca (strain YX) protein is Large ribosomal subunit protein bL36.